Reading from the N-terminus, the 294-residue chain is tRNA pseudouridine synthase B (294 aa).

Catalysis depends on Asp38, which acts as the Nucleophile.

Belongs to the pseudouridine synthase TruB family. Type 1 subfamily.

The catalysed reaction is uridine(55) in tRNA = pseudouridine(55) in tRNA. Its function is as follows. Responsible for synthesis of pseudouridine from uracil-55 in the psi GC loop of transfer RNAs. The protein is tRNA pseudouridine synthase B of Clostridium perfringens (strain 13 / Type A).